The primary structure comprises 266 residues: Energy-coupling factor transporter transmembrane protein EcfT (266 aa).

Helical transmembrane passes span 32–52, 71–91, 107–127, 152–172, and 246–266; these read IIVV…AFTV, PLLW…PAGG, LINA…STLL, VPVD…PTLM, and DTVT…FRHW.

The protein belongs to the energy-coupling factor EcfT family. Forms a stable energy-coupling factor (ECF) transporter complex composed of 2 membrane-embedded substrate-binding proteins (S component), 2 ATP-binding proteins (A component) and 2 transmembrane proteins (T component). May be able to interact with more than 1 S component at a time.

It localises to the cell membrane. In terms of biological role, transmembrane (T) component of an energy-coupling factor (ECF) ABC-transporter complex. Unlike classic ABC transporters this ECF transporter provides the energy necessary to transport a number of different substrates. This chain is Energy-coupling factor transporter transmembrane protein EcfT, found in Levilactobacillus brevis (strain ATCC 367 / BCRC 12310 / CIP 105137 / JCM 1170 / LMG 11437 / NCIMB 947 / NCTC 947) (Lactobacillus brevis).